The primary structure comprises 211 residues: Large ribosomal subunit protein uL4 (211 aa).

The interval 44 to 90 (ERQGTHSTLTKGEVRGGGKKPWRQKHTGKARTGSTRNPHWTGGGVVF) is disordered. The span at 60-72 (GGKKPWRQKHTGK) shows a compositional bias: basic residues.

The protein belongs to the universal ribosomal protein uL4 family. As to quaternary structure, part of the 50S ribosomal subunit.

Functionally, one of the primary rRNA binding proteins, this protein initially binds near the 5'-end of the 23S rRNA. It is important during the early stages of 50S assembly. It makes multiple contacts with different domains of the 23S rRNA in the assembled 50S subunit and ribosome. In terms of biological role, forms part of the polypeptide exit tunnel. The protein is Large ribosomal subunit protein uL4 of Ureaplasma parvum serovar 3 (strain ATCC 27815 / 27 / NCTC 11736).